A 245-amino-acid polypeptide reads, in one-letter code: Adapter protein MecA (245 aa).

The protein belongs to the MecA family. In terms of assembly, homodimer.

Its function is as follows. Enables the recognition and targeting of unfolded and aggregated proteins to the ClpC protease or to other proteins involved in proteolysis. This chain is Adapter protein MecA, found in Streptococcus pneumoniae (strain ATCC BAA-255 / R6).